The sequence spans 200 residues: Protein GrpE (200 aa).

The segment at 15-47 is disordered; it reads DLEMDLNEEELEESEVNEDKEFEELDKSEEENE. The segment covering 16–47 has biased composition (acidic residues); it reads LEMDLNEEELEESEVNEDKEFEELDKSEEENE.

This sequence belongs to the GrpE family. Homodimer.

Its subcellular location is the cytoplasm. Participates actively in the response to hyperosmotic and heat shock by preventing the aggregation of stress-denatured proteins, in association with DnaK and GrpE. It is the nucleotide exchange factor for DnaK and may function as a thermosensor. Unfolded proteins bind initially to DnaJ; upon interaction with the DnaJ-bound protein, DnaK hydrolyzes its bound ATP, resulting in the formation of a stable complex. GrpE releases ADP from DnaK; ATP binding to DnaK triggers the release of the substrate protein, thus completing the reaction cycle. Several rounds of ATP-dependent interactions between DnaJ, DnaK and GrpE are required for fully efficient folding. The chain is Protein GrpE from Clostridium tetani (strain Massachusetts / E88).